The primary structure comprises 374 residues: N5-carboxyaminoimidazole ribonucleotide synthase (374 aa).

Residues Arg108, Lys148, 153–159 (GYDGKGQ), 183–186 (EKYL), Glu191, His214, and 266–267 (NE) each bind ATP. The ATP-grasp domain maps to 112–296 (KETLKSAGTK…QFDTHILAVT (185 aa)).

The protein belongs to the PurK/PurT family. As to quaternary structure, homodimer.

It catalyses the reaction 5-amino-1-(5-phospho-beta-D-ribosyl)imidazole + hydrogencarbonate + ATP = 5-carboxyamino-1-(5-phospho-D-ribosyl)imidazole + ADP + phosphate + 2 H(+). It participates in purine metabolism; IMP biosynthesis via de novo pathway; 5-amino-1-(5-phospho-D-ribosyl)imidazole-4-carboxylate from 5-amino-1-(5-phospho-D-ribosyl)imidazole (N5-CAIR route): step 1/2. Catalyzes the ATP-dependent conversion of 5-aminoimidazole ribonucleotide (AIR) and HCO(3)(-) to N5-carboxyaminoimidazole ribonucleotide (N5-CAIR). The polypeptide is N5-carboxyaminoimidazole ribonucleotide synthase (Staphylococcus aureus (strain MRSA252)).